The following is a 457-amino-acid chain: Putative F-box protein At3g58860 (457 aa).

One can recognise an F-box domain in the interval 6–54; sequence MDLFSKLPDEVISHILSSLPTKEAASTSVLAKKWRYLFAFVPSLDFNDS.

The protein is Putative F-box protein At3g58860 of Arabidopsis thaliana (Mouse-ear cress).